The chain runs to 498 residues: Glutamyl-tRNA(Gln) amidotransferase subunit A (498 aa).

Active-site charge relay system residues include K85 and S160. S184 functions as the Acyl-ester intermediate in the catalytic mechanism.

Belongs to the amidase family. GatA subfamily. In terms of assembly, heterotrimer of A, B and C subunits.

The catalysed reaction is L-glutamyl-tRNA(Gln) + L-glutamine + ATP + H2O = L-glutaminyl-tRNA(Gln) + L-glutamate + ADP + phosphate + H(+). In terms of biological role, allows the formation of correctly charged Gln-tRNA(Gln) through the transamidation of misacylated Glu-tRNA(Gln) in organisms which lack glutaminyl-tRNA synthetase. The reaction takes place in the presence of glutamine and ATP through an activated gamma-phospho-Glu-tRNA(Gln). The chain is Glutamyl-tRNA(Gln) amidotransferase subunit A from Mycolicibacterium vanbaalenii (strain DSM 7251 / JCM 13017 / BCRC 16820 / KCTC 9966 / NRRL B-24157 / PYR-1) (Mycobacterium vanbaalenii).